Consider the following 203-residue polypeptide: MSIKYVATSKLPTPWGVFAMHGFEDTETGKEHVALTFGTLSSDAPVLGRIHSECLTGDALFSLRCDCGFQLQTAMQNIAETGSGFILYLRQEGRGIGLLNKIRAYELQDKGANTVEANEQLGFPADMRKYDMIQPMLEQIGVKHVRLMTNNPRKVKAMKEIGIEVVERVPLQVGKNRYNEAYLKTKSTELGHMMSEYHFTDED.

49–53 (RIHSE) is a binding site for GTP. Cys-54, Cys-65, and Cys-67 together coordinate Zn(2+). GTP contacts are provided by residues Gln-70, 92–94 (EGR), and Thr-114. Asp-126 serves as the catalytic Proton acceptor. Arg-128 (nucleophile) is an active-site residue. GTP contacts are provided by Thr-149 and Lys-154.

It belongs to the GTP cyclohydrolase II family. The cofactor is Zn(2+).

It carries out the reaction GTP + 4 H2O = 2,5-diamino-6-hydroxy-4-(5-phosphoribosylamino)-pyrimidine + formate + 2 phosphate + 3 H(+). The protein operates within cofactor biosynthesis; riboflavin biosynthesis; 5-amino-6-(D-ribitylamino)uracil from GTP: step 1/4. Catalyzes the conversion of GTP to 2,5-diamino-6-ribosylamino-4(3H)-pyrimidinone 5'-phosphate (DARP), formate and pyrophosphate. The polypeptide is GTP cyclohydrolase-2 (Shewanella sp. (strain MR-4)).